Consider the following 385-residue polypeptide: SH3 domain-binding protein 5-like (385 aa).

Residues 1–58 (MAELRQIPGGRETPQGELRPEVVEDEVPRSPVAEEPGGGGSNSSEAKLSPREEEELDP) form a disordered region. The residue at position 13 (threonine 13) is a Phosphothreonine. The span at 18–28 (LRPEVVEDEVP) shows a compositional bias: basic and acidic residues. Phosphoserine is present on residues serine 30 and serine 49. Coiled coils occupy residues 59-140 (RIQE…YERA) and 169-272 (WQEM…EQIH). The interval 272–328 (HARRRGQPAHTPGQRRSSPVGAEAGPDGGEDADSGIIEGAEGGGLEEGVSLGPGAAP) is disordered. Residues 318–328 (EGVSLGPGAAP) show a composition bias toward low complexity. Residues serine 343, serine 350, serine 358, and serine 362 each carry the phosphoserine modification. The tract at residues 359–385 (DHTSLDGQELGPRSGGRGGRHQRSISL) is disordered. A compositionally biased stretch (basic residues) spans 376–385 (GGRHQRSISL).

The protein belongs to the SH3BP5 family.

In terms of biological role, functions as a guanine nucleotide exchange factor (GEF) for RAB11A. The polypeptide is SH3 domain-binding protein 5-like (SH3BP5L) (Bos taurus (Bovine)).